The sequence spans 260 residues: Small ribosomal subunit protein eS1 (260 aa).

Over residues methionine 1–lysine 18 the composition is skewed to basic residues. The interval methionine 1–alanine 20 is disordered.

Belongs to the eukaryotic ribosomal protein eS1 family. Component of the small ribosomal subunit. Mature ribosomes consist of a small (40S) and a large (60S) subunit. The 40S subunit contains about 33 different proteins and 1 molecule of RNA (18S). The 60S subunit contains about 49 different proteins and 3 molecules of RNA (25S, 5.8S and 5S).

It localises to the cytoplasm. The chain is Small ribosomal subunit protein eS1 from Ostreococcus lucimarinus (strain CCE9901).